The sequence spans 299 residues: 33 kDa chaperonin (299 aa).

2 cysteine pairs are disulfide-bonded: cysteine 234-cysteine 236 and cysteine 268-cysteine 271.

The protein belongs to the HSP33 family. Post-translationally, under oxidizing conditions two disulfide bonds are formed involving the reactive cysteines. Under reducing conditions zinc is bound to the reactive cysteines and the protein is inactive.

The protein localises to the cytoplasm. Its function is as follows. Redox regulated molecular chaperone. Protects both thermally unfolding and oxidatively damaged proteins from irreversible aggregation. Plays an important role in the bacterial defense system toward oxidative stress. The polypeptide is 33 kDa chaperonin (Pseudomonas putida (strain ATCC 700007 / DSM 6899 / JCM 31910 / BCRC 17059 / LMG 24140 / F1)).